Consider the following 715-residue polypeptide: MIYQGETLSVSYLENGIAELRFDAPGSVNKLDRATLLSLSEAIAALQQQADLKGLILTSGKDAFIVGADITEFLELFDLPQEDLLGWLKKANDIFSAIEDLPVPTLSAIKGHALGGGCETILSTDFRLADTSAKIGLPETKLGIMPGFGGTVRLPRVIGADNALEWITTGKDYRADDALKVGAIDAVVAPDALHSAAVQMMKDAIAGKLNWQSRRAAKKAPLRLSKLEAMMSFSTAAGMVAAVAGKHYPAPMTAVKTVEAAAGMSRDEALVVEAQGFIKLAKTDVAKALVGIFLNDQHIKALAKKAAKQAAKATRHAAVLGAGIMGGGIAYQSASKGIPAVMKDINEKALALGMGEATKLLNGQLEKGRIDGIKMGQVLSAITPTLSYDNVKHVDLVVEAVVENPKVKAAVLGEVEGIIGDDAVLASNTSTIPISLLAKGLKRPQNFCGMHFFNPVHRMPLVEIIRGEQTSDETINRVVAYAAAMGKSPVVVNDCPGFFVNRVLFPYFFGFNKLVADGADFAAVDKVMEKEFGWPMGPAYLLDVVGIDTGHHAGDVMAQGFPARMSKEGRTAIDVMYDASRFGQKNGKGFYAYEQDKKGKPKKVADVAAYELLAPIAKPKQDFDKEAIIAGMMIPMINEVVLCLEEGIVATPAEADIALVYGLGFPPFRGGVFRYLDTIGLDRYVAMADQYADLGPLYRVSDRLREMAAQGKTFY.

The enoyl-CoA hydratase/isomerase stretch occupies residues 1–189; it reads MIYQGETLSV…KVGAIDAVVA (189 aa). Residue aspartate 296 participates in substrate binding. The 3-hydroxyacyl-CoA dehydrogenase stretch occupies residues 311–715; sequence AKATRHAAVL…EMAAQGKTFY (405 aa). Residues methionine 325, aspartate 344, 401 to 403, lysine 408, and serine 430 each bind NAD(+); that span reads VVE. Histidine 451 (for 3-hydroxyacyl-CoA dehydrogenase activity) is an active-site residue. Asparagine 454 contributes to the NAD(+) binding site. Residues asparagine 501 and tyrosine 661 each contribute to the substrate site.

It in the N-terminal section; belongs to the enoyl-CoA hydratase/isomerase family. The protein in the C-terminal section; belongs to the 3-hydroxyacyl-CoA dehydrogenase family. Heterotetramer of two alpha chains (FadB) and two beta chains (FadA).

The enzyme catalyses a (3S)-3-hydroxyacyl-CoA + NAD(+) = a 3-oxoacyl-CoA + NADH + H(+). It catalyses the reaction a (3S)-3-hydroxyacyl-CoA = a (2E)-enoyl-CoA + H2O. The catalysed reaction is a 4-saturated-(3S)-3-hydroxyacyl-CoA = a (3E)-enoyl-CoA + H2O. It carries out the reaction (3S)-3-hydroxybutanoyl-CoA = (3R)-3-hydroxybutanoyl-CoA. The enzyme catalyses a (3Z)-enoyl-CoA = a 4-saturated (2E)-enoyl-CoA. It catalyses the reaction a (3E)-enoyl-CoA = a 4-saturated (2E)-enoyl-CoA. It participates in lipid metabolism; fatty acid beta-oxidation. Involved in the aerobic and anaerobic degradation of long-chain fatty acids via beta-oxidation cycle. Catalyzes the formation of 3-oxoacyl-CoA from enoyl-CoA via L-3-hydroxyacyl-CoA. It can also use D-3-hydroxyacyl-CoA and cis-3-enoyl-CoA as substrate. This Aeromonas salmonicida (strain A449) protein is Fatty acid oxidation complex subunit alpha.